The chain runs to 242 residues: MQGKIALVTGSTRGIGRAIAEELSSKGAFVIGTATSEKGAEAISAYLGDKGKGLVLNVTDKESIETLLEQIKNDFGDIDILVNNAGITRDNLLMRMKDEEWFDIMQTNLTSVYHLSKAMLRSMMKKRFGRIINIGSVVGSTGNPGQTNYCAAKAGVVGFSKSLAKEVAARGITVNVVAPGFIATDMTEVLTDEQKAGILSNVPAGRLGEAKDIAKAVAFLASDDAGYITGTTLHVNGGLYLS.

NADP(+) contacts are provided by residues 10-13 (GSTR), Thr35, 57-58 (NV), and Asn84. Ser136 provides a ligand contact to substrate. The active-site Proton acceptor is Tyr149. NADP(+) is bound by residues 149-153 (YCAAK) and Ile182.

The protein belongs to the short-chain dehydrogenases/reductases (SDR) family. In terms of assembly, homotetramer.

The catalysed reaction is a (3R)-hydroxyacyl-[ACP] + NADP(+) = a 3-oxoacyl-[ACP] + NADPH + H(+). The protein operates within lipid metabolism; fatty acid biosynthesis. Its function is as follows. Catalyzes the NADPH-dependent reduction of beta-ketoacyl-ACP substrates to beta-hydroxyacyl-ACP products, the first reductive step in the elongation cycle of fatty acid biosynthesis. The protein is 3-oxoacyl-[acyl-carrier-protein] reductase FabG (fabG) of Haemophilus influenzae (strain ATCC 51907 / DSM 11121 / KW20 / Rd).